Here is a 313-residue protein sequence, read N- to C-terminus: Holliday junction branch migration complex subunit RuvB (313 aa).

The segment at Met-1–Tyr-157 is large ATPase domain (RuvB-L). Residues Gly-38, Lys-41, Thr-42, Thr-43, Glu-104–Phe-106, Arg-147, Tyr-157, and Arg-194 each bind ATP. Residue Thr-42 participates in Mg(2+) binding. The small ATPAse domain (RuvB-S) stretch occupies residues Ser-158 to Gly-228. A head domain (RuvB-H) region spans residues Lys-231–Glu-313. DNA is bound by residues Arg-286 and Arg-291.

This sequence belongs to the RuvB family. In terms of assembly, homohexamer. Forms an RuvA(8)-RuvB(12)-Holliday junction (HJ) complex. HJ DNA is sandwiched between 2 RuvA tetramers; dsDNA enters through RuvA and exits via RuvB. An RuvB hexamer assembles on each DNA strand where it exits the tetramer. Each RuvB hexamer is contacted by two RuvA subunits (via domain III) on 2 adjacent RuvB subunits; this complex drives branch migration. In the full resolvosome a probable DNA-RuvA(4)-RuvB(12)-RuvC(2) complex forms which resolves the HJ.

Its subcellular location is the cytoplasm. The enzyme catalyses ATP + H2O = ADP + phosphate + H(+). In terms of biological role, the RuvA-RuvB-RuvC complex processes Holliday junction (HJ) DNA during genetic recombination and DNA repair, while the RuvA-RuvB complex plays an important role in the rescue of blocked DNA replication forks via replication fork reversal (RFR). RuvA specifically binds to HJ cruciform DNA, conferring on it an open structure. The RuvB hexamer acts as an ATP-dependent pump, pulling dsDNA into and through the RuvAB complex. RuvB forms 2 homohexamers on either side of HJ DNA bound by 1 or 2 RuvA tetramers; 4 subunits per hexamer contact DNA at a time. Coordinated motions by a converter formed by DNA-disengaged RuvB subunits stimulates ATP hydrolysis and nucleotide exchange. Immobilization of the converter enables RuvB to convert the ATP-contained energy into a lever motion, pulling 2 nucleotides of DNA out of the RuvA tetramer per ATP hydrolyzed, thus driving DNA branch migration. The RuvB motors rotate together with the DNA substrate, which together with the progressing nucleotide cycle form the mechanistic basis for DNA recombination by continuous HJ branch migration. Branch migration allows RuvC to scan DNA until it finds its consensus sequence, where it cleaves and resolves cruciform DNA. The protein is Holliday junction branch migration complex subunit RuvB of Thermosipho melanesiensis (strain DSM 12029 / CIP 104789 / BI429).